The primary structure comprises 68 residues: U-poneritoxin(01)-Om4a (68 aa).

An N-terminal signal peptide occupies residues 1–25 (MKPSSLTLAFLVVFMMAIMYNSVQA). The propeptide occupies 26–39 (EALADADAEAFAEA).

Belongs to the formicidae venom precursor-01 superfamily. Homo- or heterodimer with PLP7 (AC A0A348G6I9); disulfide-linked. Post-translationally, truncated sequences of this peptide have also been found in the venom. It is possible they have been cleaved in the venom. As to expression, expressed by the venom gland.

The protein localises to the secreted. This homodimer composed of two cationic amphipathic alpha-helical peptides has antimicrobial activities against E.coli (MIC=3.1 uM), S.aureus (MIC=3.1 uM), and S.cerevisiae (MIC=3.1 uM). It also shows histamine-releasing activity (66.4% at 10 uM) and a weak hemolytic activity (10.5% at 50 uM). This chain is U-poneritoxin(01)-Om4a, found in Odontomachus monticola (Trap-jaw ant).